The sequence spans 114 residues: T cell receptor beta variable 25-1 (114 aa).

A signal peptide spans 1–21; it reads MTIRLLCYVGFYFLGAGLMEA. The region spanning 22 to 114 is the Ig-like domain; it reads DIYQTPRYLV…TSQYLCASSE (93 aa). A disulfide bridge connects residues C42 and C110. N72 is a glycosylation site (N-linked (GlcNAc...) asparagine).

Alpha-beta TR is a heterodimer composed of an alpha and beta chain; disulfide-linked. The alpha-beta TR is associated with the transmembrane signaling CD3 coreceptor proteins to form the TR-CD3 (TcR or TCR). The assembly of alpha-beta TR heterodimers with CD3 occurs in the endoplasmic reticulum where a single alpha-beta TR heterodimer associates with one CD3D-CD3E heterodimer, one CD3G-CD3E heterodimer and one CD247 homodimer forming a stable octameric structure. CD3D-CD3E and CD3G-CD3E heterodimers preferentially associate with TR alpha and TR beta chains, respectively. The association of the CD247 homodimer is the last step of TcR assembly in the endoplasmic reticulum and is required for transport to the cell surface.

The protein resides in the cell membrane. V region of the variable domain of T cell receptor (TR) beta chain that participates in the antigen recognition. Alpha-beta T cell receptors are antigen specific receptors which are essential to the immune response and are present on the cell surface of T lymphocytes. Recognize peptide-major histocompatibility (MH) (pMH) complexes that are displayed by antigen presenting cells (APC), a prerequisite for efficient T cell adaptive immunity against pathogens. Binding of alpha-beta TR to pMH complex initiates TR-CD3 clustering on the cell surface and intracellular activation of LCK that phosphorylates the ITAM motifs of CD3G, CD3D, CD3E and CD247 enabling the recruitment of ZAP70. In turn ZAP70 phosphorylates LAT, which recruits numerous signaling molecules to form the LAT signalosome. The LAT signalosome propagates signal branching to three major signaling pathways, the calcium, the mitogen-activated protein kinase (MAPK) kinase and the nuclear factor NF-kappa-B (NF-kB) pathways, leading to the mobilization of transcription factors that are critical for gene expression and essential for T cell growth and differentiation. The T cell repertoire is generated in the thymus, by V-(D)-J rearrangement. This repertoire is then shaped by intrathymic selection events to generate a peripheral T cell pool of self-MH restricted, non-autoaggressive T cells. Post-thymic interaction of alpha-beta TR with the pMH complexes shapes TR structural and functional avidity. The sequence is that of T cell receptor beta variable 25-1 from Homo sapiens (Human).